We begin with the raw amino-acid sequence, 179 residues long: Probable DNA-directed RNA polymerase subunit delta (179 aa).

An HTH HARE-type domain is found at 14–81 (MSLVELAYEI…GDQRWGLRSW (68 aa)). Residues 108–179 (VVEEDFDEIE…DDLDDNEEEK (72 aa)) are disordered. Residues 109–179 (VEEDFDEIEE…DDLDDNEEEK (71 aa)) are compositionally biased toward acidic residues.

Belongs to the RpoE family. RNAP is composed of a core of 2 alpha, a beta and a beta' subunits. The core is associated with a delta subunit and one of several sigma factors.

Its function is as follows. Participates in both the initiation and recycling phases of transcription. In the presence of the delta subunit, RNAP displays an increased specificity of transcription, a decreased affinity for nucleic acids, and an increased efficiency of RNA synthesis because of enhanced recycling. This Bacillus pumilus (strain SAFR-032) protein is Probable DNA-directed RNA polymerase subunit delta.